Here is a 553-residue protein sequence, read N- to C-terminus: Pseudouridylate synthase RPUSD2 (553 aa).

The disordered stretch occupies residues 76–135 (AVGKQVPESGDQAQGGEGQLPSNGEQTPAPVADSGKRKKRRGATGERVVPPPKKRRTGVS). Aspartate 287 is a catalytic residue. Threonine 490 carries the phosphothreonine modification.

It belongs to the pseudouridine synthase RluA family.

The enzyme catalyses a uridine in mRNA = a pseudouridine in mRNA. Functionally, pseudouridine synthase that catalyzes pseudouridylation of mRNAs. This is Pseudouridylate synthase RPUSD2 from Mus musculus (Mouse).